We begin with the raw amino-acid sequence, 419 residues long: Homeobox-containing protein 1 (419 aa).

Residues 18–49 (DEPRFTIEQIDLLQRLRRTGMTKHEILHALET) form the HNF-p1 domain. The disordered stretch occupies residues 56–152 (EHSDKFGRRS…GQRSYSFEAS (97 aa)). Lysine 60 participates in a covalent cross-link: Glycyl lysine isopeptide (Lys-Gly) (interchain with G-Cter in SUMO2). Low complexity-rich tracts occupy residues 64-73 (RSSYGGSSYG) and 81-93 (ASSS…TQTQ). Positions 94 to 132 (HSGMSPSPSNSYDTSPLPCTTNQNGRENNDRLSTSNGKM) are enriched in polar residues. Lysine 131 participates in a covalent cross-link: Glycyl lysine isopeptide (Lys-Gly) (interchain with G-Cter in SUMO2). The 97-residue stretch at 145 to 241 (RSYSFEASEE…PGATLSMRPA (97 aa)) folds into the POU-specific atypical domain. Serine 148 carries the phosphoserine modification. Lysine 161 is covalently cross-linked (Glycyl lysine isopeptide (Lys-Gly) (interchain with G-Cter in SUMO2)). Residue serine 170 is modified to Phosphoserine. Glycyl lysine isopeptide (Lys-Gly) (interchain with G-Cter in SUMO2) cross-links involve residues lysine 174, lysine 217, and lysine 310. The segment at residues 267–341 (RRGSRFTWRK…NRRKEIKRRA (75 aa)) is a DNA-binding region (homeobox). Residues 352–384 (IDVQSPGGHSNSDDVDGNDYSEQDDSTSHSDHQ) form a disordered region. Residues 364 to 376 (DDVDGNDYSEQDD) are compositionally biased toward acidic residues. Residue lysine 412 forms a Glycyl lysine isopeptide (Lys-Gly) (interchain with G-Cter in SUMO1); alternate linkage. Lysine 412 participates in a covalent cross-link: Glycyl lysine isopeptide (Lys-Gly) (interchain with G-Cter in SUMO2); alternate.

Associates with the telomerase holoenzyme complex. Interacts with DKC1, XRCC6 and COIL.

It localises to the nucleus. The protein localises to the cytoplasm. It is found in the chromosome. The protein resides in the telomere. Its subcellular location is the cajal body. It localises to the PML body. Its function is as follows. Binds directly to 5'-TTAGGG-3' repeats in telomeric DNA. Associates with the telomerase complex at sites of active telomere processing and positively regulates telomere elongation. Important for TERT binding to chromatin, indicating a role in recruitment of the telomerase complex to telomeres. Also plays a role in the alternative lengthening of telomeres (ALT) pathway in telomerase-negative cells where it promotes formation and/or maintenance of ALT-associated promyelocytic leukemia bodies (APBs). Enhances formation of telomere C-circles in ALT cells, suggesting a possible role in telomere recombination. Might also be involved in the DNA damage response at telomeres. This Mus musculus (Mouse) protein is Homeobox-containing protein 1 (Hmbox1).